Reading from the N-terminus, the 476-residue chain is MIEDVVESLKNGNLTPEDYVEKTYEKIERVEKLIHSFITIRNKQEIIDEVKKNISNKHGKLAGVLIAIKDNISTLGIRTTCASRILEDYIPPYDATVVEKLKSEGAVIIGKTNMDEFAMGSTTETSYFGPTKNPWDLERTPGGSSGGSGAVLAGGIVELALGSDTGGSIRAPAAFNGVFGLKPSYGTVSRYGLIAYANSLEQIGPMAKNAEDLELLYDVIAGEDWRDATTISINKNEYKRDGSSKVDLKNIKIAVLKDILEASEKPVTSAFNEILDKLVSEGVSIDYIEFKLAEYALPAYYIIAMSEASSNLARFDGVRYGYSAHYDGIWKDTYGKNRGEGFGIEVKRRIMLGSFILSAGYYEQYYIKALKVRRLIKDEIDRILKQYDFIASPTMPIIPPKLGEVVGDPLKMYAMDLNTVIANLAGVPALSQPIGFYNNLPIGLQLMGSYLSDYKLINISKNIEKISKYYNLTANI.

Residues K69 and S144 each act as charge relay system in the active site. S168 serves as the catalytic Acyl-ester intermediate.

Belongs to the amidase family. GatA subfamily. As to quaternary structure, heterotrimer of A, B and C subunits.

The catalysed reaction is L-glutamyl-tRNA(Gln) + L-glutamine + ATP + H2O = L-glutaminyl-tRNA(Gln) + L-glutamate + ADP + phosphate + H(+). Its function is as follows. Allows the formation of correctly charged Gln-tRNA(Gln) through the transamidation of misacylated Glu-tRNA(Gln) in organisms which lack glutaminyl-tRNA synthetase. The reaction takes place in the presence of glutamine and ATP through an activated gamma-phospho-Glu-tRNA(Gln). The sequence is that of Glutamyl-tRNA(Gln) amidotransferase subunit A from Sulfolobus acidocaldarius (strain ATCC 33909 / DSM 639 / JCM 8929 / NBRC 15157 / NCIMB 11770).